Here is a 367-residue protein sequence, read N- to C-terminus: Protein SGT1 homolog (367 aa).

3 TPR repeats span residues 6 to 39 (ASDLESKAKAAFVDDDFELAAELYTQAIEASPAT), 40 to 73 (AELYADRAQAHIKLGNYTEAVADANKAIELDPSM), and 75 to 107 (KAYLRKGAACIRLEEYQTAKAALELGYSFASGD). Residues 165–254 (KPKYRHDFYN…AEQITWTSLD (90 aa)) form the CS domain. Disordered regions lie at residues 261–289 (AVPQKIIPPAESAQRPSYPSSKSKKDWDK) and 347–367 (VGSKKVEGSPPDGMELKKWEY). The region spanning 277–367 (SYPSSKSKKD…DGMELKKWEY (91 aa)) is the SGS domain.

The protein belongs to the SGT1 family. As to quaternary structure, interacts (via CS domain) with RAR1 (via CHORD 2 domain). Interacts with RAD6. As to expression, expressed in roots, root tips, shoot apical meristem (SAM), young leaves, flag leaves and ears.

The protein localises to the cytoplasm. The protein resides in the nucleus. Its function is as follows. Involved in basal disease resistance to bacterial blight (X.oryzae). May act as positive regulator of basal defense. Probably required for SCF-mediated ubiquitination, by coupling HSP90 to SCF complex for ubiquitination of HSP90 client proteins. This Oryza sativa subsp. japonica (Rice) protein is Protein SGT1 homolog.